Here is a 339-residue protein sequence, read N- to C-terminus: Transmembrane protein 120B (339 aa).

Residues 1–77 (MSGQLERCER…ASREEAELVQ (77 aa)) adopt a coiled-coil conformation. 6 consecutive transmembrane segments (helical) span residues 102–124 (GLYLNLVLGNVNVTLLSNQAKFA), 132–152 (FKLYLTIILLLGAVACRFFLH), 159–179 (VFNFLLVWYYCTLTIRESILI), 187–207 (GWWVSHHYVSTFLSGVMLTWP), 270–290 (FLLPFLFCGHFWQLYNAVTLF), and 302–322 (QVFVLALTFLVLFLGNFLTTL).

It belongs to the TMEM120 family. In terms of assembly, heterooligomer with TMEM120A.

The protein localises to the nucleus inner membrane. Functionally, necessary for efficient adipogenesis. Does not show ion channel activity. This is Transmembrane protein 120B (TMEM120B) from Bos taurus (Bovine).